A 449-amino-acid chain; its full sequence is tRNA-2-methylthio-N(6)-dimethylallyladenosine synthase (449 aa).

The MTTase N-terminal domain occupies 13–128; that stretch reads RRIFIETYGC…LPHLIGTVEK (116 aa). Positions 22, 58, 92, 166, 170, and 173 each coordinate [4Fe-4S] cluster. A Radical SAM core domain is found at 152 to 383; it reads SRIKISGFIS…ITLQLKISLM (232 aa). A TRAM domain is found at 386 to 449; it reads KENIGKTMEI…AATLFGDPKL (64 aa).

It belongs to the methylthiotransferase family. MiaB subfamily. In terms of assembly, monomer. The cofactor is [4Fe-4S] cluster.

The protein resides in the cytoplasm. It catalyses the reaction N(6)-dimethylallyladenosine(37) in tRNA + (sulfur carrier)-SH + AH2 + 2 S-adenosyl-L-methionine = 2-methylsulfanyl-N(6)-dimethylallyladenosine(37) in tRNA + (sulfur carrier)-H + 5'-deoxyadenosine + L-methionine + A + S-adenosyl-L-homocysteine + 2 H(+). Catalyzes the methylthiolation of N6-(dimethylallyl)adenosine (i(6)A), leading to the formation of 2-methylthio-N6-(dimethylallyl)adenosine (ms(2)i(6)A) at position 37 in tRNAs that read codons beginning with uridine. In Azobacteroides pseudotrichonymphae genomovar. CFP2, this protein is tRNA-2-methylthio-N(6)-dimethylallyladenosine synthase.